A 431-amino-acid chain; its full sequence is Histidine--tRNA ligase (431 aa).

The protein belongs to the class-II aminoacyl-tRNA synthetase family. As to quaternary structure, homodimer.

It localises to the cytoplasm. The enzyme catalyses tRNA(His) + L-histidine + ATP = L-histidyl-tRNA(His) + AMP + diphosphate + H(+). This Neisseria gonorrhoeae (strain ATCC 700825 / FA 1090) protein is Histidine--tRNA ligase.